A 250-amino-acid chain; its full sequence is 3-deoxy-manno-octulosonate cytidylyltransferase (250 aa).

The protein belongs to the KdsB family.

It localises to the cytoplasm. The enzyme catalyses 3-deoxy-alpha-D-manno-oct-2-ulosonate + CTP = CMP-3-deoxy-beta-D-manno-octulosonate + diphosphate. The protein operates within nucleotide-sugar biosynthesis; CMP-3-deoxy-D-manno-octulosonate biosynthesis; CMP-3-deoxy-D-manno-octulosonate from 3-deoxy-D-manno-octulosonate and CTP: step 1/1. It participates in bacterial outer membrane biogenesis; lipopolysaccharide biosynthesis. Functionally, activates KDO (a required 8-carbon sugar) for incorporation into bacterial lipopolysaccharide in Gram-negative bacteria. This Xanthomonas campestris pv. campestris (strain 8004) protein is 3-deoxy-manno-octulosonate cytidylyltransferase.